Here is a 465-residue protein sequence, read N- to C-terminus: Na(+)-translocating NADH-quinone reductase subunit A (465 aa).

The protein belongs to the NqrA family. In terms of assembly, composed of six subunits; NqrA, NqrB, NqrC, NqrD, NqrE and NqrF.

The enzyme catalyses a ubiquinone + n Na(+)(in) + NADH + H(+) = a ubiquinol + n Na(+)(out) + NAD(+). NQR complex catalyzes the reduction of ubiquinone-1 to ubiquinol by two successive reactions, coupled with the transport of Na(+) ions from the cytoplasm to the periplasm. NqrA to NqrE are probably involved in the second step, the conversion of ubisemiquinone to ubiquinol. This chain is Na(+)-translocating NADH-quinone reductase subunit A, found in Chlamydia trachomatis serovar A (strain ATCC VR-571B / DSM 19440 / HAR-13).